A 496-amino-acid polypeptide reads, in one-letter code: Cytochrome P450 71D18 (496 aa).

The helical; Signal-anchor for type II membrane protein transmembrane segment at 2–22 threads the bilayer; that stretch reads ELDLLSAIIILVATYIVSLLI. Residue Cys-436 coordinates heme.

It belongs to the cytochrome P450 family. It depends on heme as a cofactor.

The protein resides in the endoplasmic reticulum membrane. The enzyme catalyses (4S)-limonene + reduced [NADPH--hemoprotein reductase] + O2 = (1S,5R)-carveol + oxidized [NADPH--hemoprotein reductase] + H2O + H(+). In terms of biological role, hydroxylates (-)-(4S)-limonene to (-)-trans-carveol, a precursor of (-)-carvone. Fluorinated substrate analogs are hydroxylated with the same regio- and stereochemistry. The protein is Cytochrome P450 71D18 (CYP71D18) of Mentha gracilis (Gingermint).